The sequence spans 91 residues: Small ribosomal subunit protein bS16 (91 aa).

It belongs to the bacterial ribosomal protein bS16 family.

This Ligilactobacillus salivarius (strain UCC118) (Lactobacillus salivarius) protein is Small ribosomal subunit protein bS16.